A 366-amino-acid polypeptide reads, in one-letter code: Peptide chain release factor 2 (366 aa).

Gln253 carries the N5-methylglutamine modification.

The protein belongs to the prokaryotic/mitochondrial release factor family. Methylated by PrmC. Methylation increases the termination efficiency of RF2.

Its subcellular location is the cytoplasm. Functionally, peptide chain release factor 2 directs the termination of translation in response to the peptide chain termination codons UGA and UAA. This chain is Peptide chain release factor 2, found in Yersinia pseudotuberculosis serotype I (strain IP32953).